Here is a 255-residue protein sequence, read N- to C-terminus: Small ribosomal subunit protein uS3c (255 aa).

Positions 51 to 124 (IRESSNTSYG…NKNQNKNTGQ (74 aa)) constitute a KH type-2 domain. The tract at residues 96–121 (EKNRDKNKSNKNSALDQSVNKNQNKN) is disordered. The segment covering 108–121 (SALDQSVNKNQNKN) has biased composition (polar residues).

The protein belongs to the universal ribosomal protein uS3 family. As to quaternary structure, part of the 30S ribosomal subunit.

The protein localises to the plastid. Its subcellular location is the chloroplast. This chain is Small ribosomal subunit protein uS3c (rps3), found in Chaetosphaeridium globosum (Charophycean green alga).